We begin with the raw amino-acid sequence, 163 residues long: Pheromone-binding protein (163 aa).

Residues 1–22 (MMSVRLMLVVAVWLCLRVDASQ) form the signal peptide. 3 disulfide bridges follow: Cys39/Cys74, Cys70/Cys129, and Cys117/Cys138.

This sequence belongs to the PBP/GOBP family. In terms of tissue distribution, antenna.

This major soluble protein in olfactory sensilla of male moths might serve to solubilize the extremely hydrophobic pheromone molecules and to transport pheromone through the aqueous lymph to receptors located on olfactory cilia. The sequence is that of Pheromone-binding protein from Heliothis virescens (Tobacco budworm moth).